Consider the following 141-residue polypeptide: Hemoglobin subunit alpha (141 aa).

Residues 1–141 (VLSAADKANV…VSTVLTSKYR (141 aa)) form the Globin domain. S3 carries the post-translational modification Phosphoserine. An N6-succinyllysine mark is found at K7 and K11. K16 carries the N6-acetyllysine; alternate modification. K16 carries the N6-succinyllysine; alternate modification. An N6-succinyllysine modification is found at K40. S49 is modified (phosphoserine). H58 provides a ligand contact to O2. H87 provides a ligand contact to heme b. S102 carries the post-translational modification Phosphoserine. T108 is modified (phosphothreonine). A Phosphoserine modification is found at S124. Phosphothreonine occurs at positions 134 and 137. S138 is subject to Phosphoserine.

It belongs to the globin family. Heterotetramer of two alpha chains and two beta chains. As to expression, red blood cells.

In terms of biological role, involved in oxygen transport from the lung to the various peripheral tissues. Its function is as follows. Hemopressin acts as an antagonist peptide of the cannabinoid receptor CNR1. Hemopressin-binding efficiently blocks cannabinoid receptor CNR1 and subsequent signaling. The polypeptide is Hemoglobin subunit alpha (HBA) (Sus scrofa (Pig)).